Consider the following 37-residue polypeptide: Kappa-actitoxin-Bcs3b (37 aa).

The ShKT domain maps to 2–37 (CKDGFPTATCQHAKLVGNCKNSQKYRANCAKTCGPC). Cystine bridges form between Cys-2–Cys-37, Cys-11–Cys-30, and Cys-20–Cys-34. The interval 25–26 (KY) is crucial for binding to potassium channels.

It belongs to the sea anemone type 1 potassium channel toxin family. Type 1b subfamily.

The protein localises to the secreted. It localises to the nematocyst. In terms of biological role, inhibits voltage-gated potassium channels (IC(50)=14.42 nM for rKCNA1/Kv1.1, IC(50)=80.4 nM for rKCNA2/Kv1.2, IC(50)=7.76 nM for rKCNA6/Kv1.6, IC(50)=13.12 nM for hKCNA3/Kv1.3, and IC(50)=49.14 nM for insect Shaker IR). Binds the Shaker IR channels in a voltage-independent manner. The protein is Kappa-actitoxin-Bcs3b of Bunodosoma caissarum (Sea anemone).